The chain runs to 100 residues: Putative sodium channel toxin Ts26 (100 aa).

The N-terminal stretch at Met-1–Ser-22 is a signal peptide. The LCN-type CS-alpha/beta domain maps to Arg-24–Glu-92. 4 cysteine pairs are disulfide-bonded: Cys-38/Cys-64, Cys-50/Cys-69, Cys-54/Cys-71, and Cys-65/Cys-91.

Belongs to the long (4 C-C) scorpion toxin superfamily. Sodium channel inhibitor family. Expressed by the venom gland.

The protein localises to the secreted. Functionally, putative sodium channel toxin. This Tityus serrulatus (Brazilian scorpion) protein is Putative sodium channel toxin Ts26.